A 234-amino-acid polypeptide reads, in one-letter code: 2,3,4,5-tetrahydropyridine-2,6-dicarboxylate N-acetyltransferase (234 aa).

This sequence belongs to the transferase hexapeptide repeat family. DapH subfamily.

The enzyme catalyses (S)-2,3,4,5-tetrahydrodipicolinate + acetyl-CoA + H2O = L-2-acetamido-6-oxoheptanedioate + CoA. It functions in the pathway amino-acid biosynthesis; L-lysine biosynthesis via DAP pathway; LL-2,6-diaminopimelate from (S)-tetrahydrodipicolinate (acetylase route): step 1/3. Its function is as follows. Catalyzes the transfer of an acetyl group from acetyl-CoA to tetrahydrodipicolinate. In Ligilactobacillus salivarius (strain UCC118) (Lactobacillus salivarius), this protein is 2,3,4,5-tetrahydropyridine-2,6-dicarboxylate N-acetyltransferase.